Reading from the N-terminus, the 228-residue chain is Non-specific lipid-transfer protein EPAD1 (228 aa).

Positions 1 to 24 are cleaved as a signal peptide; sequence MERSHLAVLLGLLAFAAGVPAAAA. 3 disulfide bridges follow: cysteine 40–cysteine 62, cysteine 63–cysteine 105, and cysteine 78–cysteine 119. Asparagine 94 is a glycosylation site (N-linked (GlcNAc...) asparagine). Residues 124 to 207 form a disordered region; that stretch reads PPASIVTAPP…PPRSGASSSL (84 aa). Residues 145 to 162 are compositionally biased toward pro residues; it reads REAPPPPPAAEKLSPPPQ.

This sequence belongs to the plant LTP family. As to expression, expressed in young panicles. Specifically expressed in pollen mother cells and young microspores.

The protein resides in the cell membrane. In terms of biological role, plant non-specific lipid-transfer protein that binds phospholipids in vitro. Required for correct pollen exine patterning by controlling the continuity and homogeneity of the primexine distribution. This Oryza sativa subsp. japonica (Rice) protein is Non-specific lipid-transfer protein EPAD1.